Consider the following 681-residue polypeptide: Methionine--tRNA ligase (681 aa).

The 'HIGH' region motif lies at Pro12–His22. Residues Cys143, Cys146, Cys156, and Cys159 each coordinate Zn(2+). A 'KMSKS' region motif is present at residues Lys327–Ser331. Residue Lys330 participates in ATP binding. The segment covering Phe545–Pro557 has biased composition (basic and acidic residues). The disordered stretch occupies residues Phe545 to Lys566. Positions Glu580–Lys681 constitute a tRNA-binding domain.

Belongs to the class-I aminoacyl-tRNA synthetase family. MetG type 1 subfamily. In terms of assembly, homodimer. Zn(2+) serves as cofactor.

The protein resides in the cytoplasm. It catalyses the reaction tRNA(Met) + L-methionine + ATP = L-methionyl-tRNA(Met) + AMP + diphosphate. Is required not only for elongation of protein synthesis but also for the initiation of all mRNA translation through initiator tRNA(fMet) aminoacylation. The protein is Methionine--tRNA ligase of Leptospira biflexa serovar Patoc (strain Patoc 1 / ATCC 23582 / Paris).